The following is a 312-amino-acid chain: HTH-type transcriptional regulator PtxR (312 aa).

Residues 11–68 (LNLNHLYAFVAVAEHNSFTAAAEALGLSKSLLSEQLRRLEADLGIQLLTRTTRRMTLT) form the HTH lysR-type domain. Residues 28–47 (FTAAAEALGLSKSLLSEQLR) constitute a DNA-binding region (H-T-H motif).

Belongs to the LysR transcriptional regulatory family. As to quaternary structure, monomer in solution. May dimerize on binding to DNA. Interacts with PtxS in the absence of 2-ketogluconate. Binding of the 2-ketogluconate effector to PtxS causes PtxS/PtxR complex dissociation.

Its activity is regulated as follows. Negatively regulated by PtxS, which interacts with PtxR and prevents its activity. Plays an important role in the regulation of the production of the virulence factor exotoxin A (toxA), via positive regulation of the transcription of the toxA gene. Acts by binding directly to the toxA promoter region. Besides toxA, PtxR modulates the expression of genes that code for the QS-controlled virulence factors. It negatively regulates the expression of the rhamnolipid and pyocyanine genes, through the autoinducer synthase RhlI, and the PQS synthesis operon pqsABCDE, while it positively regulates the expression of lasB through the autoinducer synthase LasI. Also positively regulates the expression of the exotoxin A regulatory protein (toxR or regA). Functionally, in addition, is involved in the positive regulation of glucose metabolism via the regulation of the expression of the kgu and gad operons. Acts by binding directly to the promoter region of the kgu and gad operons. This chain is HTH-type transcriptional regulator PtxR, found in Pseudomonas aeruginosa (strain ATCC 15692 / DSM 22644 / CIP 104116 / JCM 14847 / LMG 12228 / 1C / PRS 101 / PAO1).